We begin with the raw amino-acid sequence, 549 residues long: Eukaryotic translation initiation factor 3 subunit D-2 (549 aa).

The interval 107 to 157 (ARVKGRSGRGPGMLGVAGSMAGGGTTSGSTKYGKGRESRRNQGRRFARNAP) is disordered. A compositionally biased stretch (gly residues) spans 114-132 (GRGPGMLGVAGSMAGGGTT). Residues 288-302 (QFDLLTVNETSLEPP) form an RNA gate region. The segment at 527–549 (NSFDSDAEDEENSSEPFANSLDN) is disordered. A compositionally biased stretch (acidic residues) spans 529-539 (FDSDAEDEENS).

Belongs to the eIF-3 subunit D family. Component of the eukaryotic translation initiation factor 3 (eIF-3) complex. The eIF-3 complex interacts with pix.

It localises to the cytoplasm. In terms of biological role, mRNA cap-binding component of the eukaryotic translation initiation factor 3 (eIF-3) complex, which is involved in protein synthesis of a specialized repertoire of mRNAs and, together with other initiation factors, stimulates binding of mRNA and methionyl-tRNAi to the 40S ribosome. The eIF-3 complex specifically targets and initiates translation of a subset of mRNAs involved in cell proliferation. In the eIF-3 complex, eif3d specifically recognizes and binds the 7-methylguanosine cap of a subset of mRNAs. The sequence is that of Eukaryotic translation initiation factor 3 subunit D-2 from Drosophila ananassae (Fruit fly).